Reading from the N-terminus, the 60-residue chain is Large ribosomal subunit protein bL32 (60 aa).

Residues 1–23 form a disordered region; it reads MAVPRNRHSNARKNIRRSHHAKK.

Belongs to the bacterial ribosomal protein bL32 family.

The sequence is that of Large ribosomal subunit protein bL32 from Chlamydia caviae (strain ATCC VR-813 / DSM 19441 / 03DC25 / GPIC) (Chlamydophila caviae).